A 191-amino-acid chain; its full sequence is Recombination protein RecR (191 aa).

The C4-type zinc-finger motif lies at 51–66; sequence CQTCFHLSADPECEIC. The region spanning 74 to 168 is the Toprim domain; that stretch reads GVICVVADSR…SVSRIAYGLP (95 aa).

It belongs to the RecR family.

Functionally, may play a role in DNA repair. It seems to be involved in an RecBC-independent recombinational process of DNA repair. It may act with RecF and RecO. This Synechococcus sp. (strain CC9605) protein is Recombination protein RecR.